The chain runs to 514 residues: CENP-B homolog protein 2 (514 aa).

The 76-residue stretch at 70–145 (QIRRNRQGKY…KKRCLKHGLK (76 aa)) folds into the HTH CENPB-type domain. A DDE-1 domain is found at 172–384 (FDPKDIFNMD…FEPSIIYNCF (213 aa)).

Its subcellular location is the nucleus. The protein resides in the chromosome. It is found in the centromere. Its function is as follows. Binds to the central core and core-associated repeat regions of centromeric heterochromatin. This Schizosaccharomyces pombe (strain 972 / ATCC 24843) (Fission yeast) protein is CENP-B homolog protein 2 (cbh2).